Reading from the N-terminus, the 346-residue chain is MINSKQKIAVLGAGSWGTALAALVARHDYPTILWGRDVRVIQSIDIQHQNFRYLPSIMLPQTLRATTDLAAAVSGADWVLVAVPSYAFTETLCRLAPLLSIGVGVAWATKGFEPGSGRFLHEVAREILGGDAPLAVVTGPSFAKEVTLGLPTAVTVHGEDACFTQMVANAMHGPMFRAYTGNDVIGAELGGAMKNVLAVAIGVADGMQLGMNARAGLITRGLNEMLRLSAVIGARPETLMGLAGLGDLVLTCTGDLSRNRRLGFALGRGQSLSDAIREIGQVVESVQTSDEVMRHAEQNGVELPISEAVRAVLREEITPYAGMKVLLAREQKPEYLDILFKANCSL.

Residues Ser-15, Trp-16, Arg-36, and Lys-110 each contribute to the NADPH site. Residues Lys-110, Gly-139, and Ser-141 each contribute to the sn-glycerol 3-phosphate site. NADPH is bound at residue Ala-143. The sn-glycerol 3-phosphate site is built by Lys-194, Asp-247, Ser-257, Arg-258, and Asn-259. Lys-194 acts as the Proton acceptor in catalysis. Arg-258 is an NADPH binding site. Positions 282 and 284 each coordinate NADPH.

Belongs to the NAD-dependent glycerol-3-phosphate dehydrogenase family.

The protein localises to the cytoplasm. The enzyme catalyses sn-glycerol 3-phosphate + NAD(+) = dihydroxyacetone phosphate + NADH + H(+). It catalyses the reaction sn-glycerol 3-phosphate + NADP(+) = dihydroxyacetone phosphate + NADPH + H(+). Its pathway is membrane lipid metabolism; glycerophospholipid metabolism. Functionally, catalyzes the reduction of the glycolytic intermediate dihydroxyacetone phosphate (DHAP) to sn-glycerol 3-phosphate (G3P), the key precursor for phospholipid synthesis. This is Glycerol-3-phosphate dehydrogenase [NAD(P)+] from Xylella fastidiosa (strain M23).